The following is a 351-amino-acid chain: ADP-glucose phosphorylase (351 aa).

The disordered stretch occupies residues 1–63; the sequence is MTSPSHASDR…QNPNPKPSSC (63 aa). Residue 41 to 44 coordinates ADP-alpha-D-glucose; the sequence is RAKR. Cys63 and Cys66 together coordinate Zn(2+). ADP-alpha-D-glucose is bound by residues 72–74 and Asn94; that span reads ECA. Residue His133 coordinates Zn(2+). Residues Asn173 and 179 to 182 contribute to the ADP-alpha-D-glucose site; that span reads GASM. Residue His184 participates in Zn(2+) binding. The active-site Tele-AMP-histidine intermediate is the His186. Gln188 contacts ADP-alpha-D-glucose. Zn(2+)-binding residues include Cys216, Cys219, His255, and His310. Residues Gly321 and 325–326 contribute to the ADP-alpha-D-glucose site; that span reads FE.

It belongs to the galactose-1-phosphate uridylyltransferase type 1 family. Homodimer. Zn(2+) serves as cofactor.

It catalyses the reaction alpha-D-glucose 1-phosphate + ADP + H(+) = ADP-alpha-D-glucose + phosphate. Catalyzes the conversion of ADP-glucose and inorganic phosphate (Pi) into glucose-1-phosphate and ADP. Does not possess galactose-1-phosphate uridylyltransferase activity. The sequence is that of ADP-glucose phosphorylase from Arabidopsis thaliana (Mouse-ear cress).